Reading from the N-terminus, the 154-residue chain is uncharacterized protein (154 aa).

The protein resides in the mitochondrion. This is an uncharacterized protein from Marchantia polymorpha (Common liverwort).